We begin with the raw amino-acid sequence, 60 residues long: Probable UDP-arabinopyranose mutase 1 (60 aa).

Belongs to the RGP family. Homopentamer or homohexamer. It depends on Mn(2+) as a cofactor. The cofactor is Mg(2+).

The protein localises to the secreted. It is found in the cell wall. Its subcellular location is the cell junction. It localises to the plasmodesma. The protein resides in the golgi apparatus. The enzyme catalyses UDP-beta-L-arabinofuranose = UDP-beta-L-arabinopyranose. In terms of biological role, probable UDP-L-arabinose mutase involved in the biosynthesis of cell wall non-cellulosic polysaccharides. This Phoenix dactylifera (Date palm) protein is Probable UDP-arabinopyranose mutase 1.